The chain runs to 469 residues: 3-isopropylmalate dehydratase large subunit 2 (469 aa).

Cysteine 347, cysteine 408, and cysteine 411 together coordinate [4Fe-4S] cluster.

Belongs to the aconitase/IPM isomerase family. LeuC type 1 subfamily. In terms of assembly, heterodimer of LeuC and LeuD. [4Fe-4S] cluster serves as cofactor.

The catalysed reaction is (2R,3S)-3-isopropylmalate = (2S)-2-isopropylmalate. It functions in the pathway amino-acid biosynthesis; L-leucine biosynthesis; L-leucine from 3-methyl-2-oxobutanoate: step 2/4. In terms of biological role, catalyzes the isomerization between 2-isopropylmalate and 3-isopropylmalate, via the formation of 2-isopropylmaleate. The polypeptide is 3-isopropylmalate dehydratase large subunit 2 (Mannheimia succiniciproducens (strain KCTC 0769BP / MBEL55E)).